The sequence spans 233 residues: Ribosome maturation protein SDO1 homolog (233 aa).

This sequence belongs to the SDO1/SBDS family.

This is Ribosome maturation protein SDO1 homolog from Aeropyrum pernix (strain ATCC 700893 / DSM 11879 / JCM 9820 / NBRC 100138 / K1).